Reading from the N-terminus, the 505-residue chain is Maturase K (505 aa).

The protein belongs to the intron maturase 2 family. MatK subfamily.

The protein resides in the plastid. It localises to the chloroplast. Usually encoded in the trnK tRNA gene intron. Probably assists in splicing its own and other chloroplast group II introns. The sequence is that of Maturase K from Rosa stellata (Star rose).